The sequence spans 503 residues: Probable cytosol aminopeptidase (503 aa).

Residues K274 and D279 each coordinate Mn(2+). K286 is a catalytic residue. Positions 297, 356, and 358 each coordinate Mn(2+). R360 is an active-site residue.

The protein belongs to the peptidase M17 family. Mn(2+) is required as a cofactor.

The protein resides in the cytoplasm. It carries out the reaction Release of an N-terminal amino acid, Xaa-|-Yaa-, in which Xaa is preferably Leu, but may be other amino acids including Pro although not Arg or Lys, and Yaa may be Pro. Amino acid amides and methyl esters are also readily hydrolyzed, but rates on arylamides are exceedingly low.. The enzyme catalyses Release of an N-terminal amino acid, preferentially leucine, but not glutamic or aspartic acids.. Functionally, presumably involved in the processing and regular turnover of intracellular proteins. Catalyzes the removal of unsubstituted N-terminal amino acids from various peptides. This chain is Probable cytosol aminopeptidase, found in Burkholderia pseudomallei (strain 1710b).